The following is a 214-amino-acid chain: Probable transaldolase (214 aa).

The Schiff-base intermediate with substrate role is filled by K83.

The protein belongs to the transaldolase family. Type 3B subfamily.

It is found in the cytoplasm. The enzyme catalyses D-sedoheptulose 7-phosphate + D-glyceraldehyde 3-phosphate = D-erythrose 4-phosphate + beta-D-fructose 6-phosphate. Its pathway is carbohydrate degradation; pentose phosphate pathway; D-glyceraldehyde 3-phosphate and beta-D-fructose 6-phosphate from D-ribose 5-phosphate and D-xylulose 5-phosphate (non-oxidative stage): step 2/3. In terms of biological role, transaldolase is important for the balance of metabolites in the pentose-phosphate pathway. The polypeptide is Probable transaldolase (Geotalea daltonii (strain DSM 22248 / JCM 15807 / FRC-32) (Geobacter daltonii)).